The sequence spans 84 residues: Putative membrane protein insertion efficiency factor (84 aa).

A disordered region spans residues 63–84 (LGGSGYDPPPPPKTPRKWKCEE).

The protein belongs to the UPF0161 family.

Its subcellular location is the cell inner membrane. Functionally, could be involved in insertion of integral membrane proteins into the membrane. In Caulobacter sp. (strain K31), this protein is Putative membrane protein insertion efficiency factor.